A 279-amino-acid polypeptide reads, in one-letter code: Ribosome maturation factor RimP (279 aa).

Residues 197 to 279 (LAEEGEPEEQ…GAPALRPTPK (83 aa)) form a disordered region. Residues 199 to 210 (EEGEPEEQEEGG) show a composition bias toward acidic residues.

Belongs to the RimP family.

The protein localises to the cytoplasm. Its function is as follows. Required for maturation of 30S ribosomal subunits. This Methylocella silvestris (strain DSM 15510 / CIP 108128 / LMG 27833 / NCIMB 13906 / BL2) protein is Ribosome maturation factor RimP.